The sequence spans 209 residues: A-type ATP synthase subunit D (209 aa).

This sequence belongs to the V-ATPase D subunit family. As to quaternary structure, has multiple subunits with at least A(3), B(3), C, D, E, F, H, I and proteolipid K(x).

The protein resides in the cell membrane. In terms of biological role, component of the A-type ATP synthase that produces ATP from ADP in the presence of a proton gradient across the membrane. The chain is A-type ATP synthase subunit D from Methanosarcina acetivorans (strain ATCC 35395 / DSM 2834 / JCM 12185 / C2A).